Reading from the N-terminus, the 596-residue chain is Elongation factor 4 (596 aa).

Residues 2–184 enclose the tr-type G domain; sequence KHIRNFSIIA…VIVAKIPPPE (183 aa). Residues 14–19 and 131–134 each bind GTP; these read DHGKST and NKID.

It belongs to the TRAFAC class translation factor GTPase superfamily. Classic translation factor GTPase family. LepA subfamily.

The protein resides in the cell inner membrane. The catalysed reaction is GTP + H2O = GDP + phosphate + H(+). Functionally, required for accurate and efficient protein synthesis under certain stress conditions. May act as a fidelity factor of the translation reaction, by catalyzing a one-codon backward translocation of tRNAs on improperly translocated ribosomes. Back-translocation proceeds from a post-translocation (POST) complex to a pre-translocation (PRE) complex, thus giving elongation factor G a second chance to translocate the tRNAs correctly. Binds to ribosomes in a GTP-dependent manner. This is Elongation factor 4 from Shewanella sp. (strain W3-18-1).